We begin with the raw amino-acid sequence, 430 residues long: mRNA cap guanine-N(7) methyltransferase (430 aa).

The interval 1 to 88 (MALRPEKPVW…YDLEERKKKQ (88 aa)) is disordered. Positions 15-37 (QYDRQYGKLEEPKPPREESKPGD) are enriched in basic and acidic residues. In terms of domain architecture, mRNA cap 0 methyltransferase spans 136 to 419 (SPIIKLRNFN…FYTVFAFRKV (284 aa)). 145 to 146 (NN) contributes to the mRNA binding site. 6 residues coordinate S-adenosyl-L-methionine: lysine 149, glycine 167, aspartate 189, aspartate 218, glutamine 244, and tyrosine 249.

The protein belongs to the class I-like SAM-binding methyltransferase superfamily. mRNA cap 0 methyltransferase family.

It localises to the nucleus. It carries out the reaction a 5'-end (5'-triphosphoguanosine)-ribonucleoside in mRNA + S-adenosyl-L-methionine = a 5'-end (N(7)-methyl 5'-triphosphoguanosine)-ribonucleoside in mRNA + S-adenosyl-L-homocysteine. Responsible for methylating the 5'-cap structure of mRNAs. In Eremothecium gossypii (strain ATCC 10895 / CBS 109.51 / FGSC 9923 / NRRL Y-1056) (Yeast), this protein is mRNA cap guanine-N(7) methyltransferase (ABD1).